We begin with the raw amino-acid sequence, 862 residues long: Phosphatidic acid phosphohydrolase 1 (862 aa).

Residues 19 to 104 (NPATLSGAID…VPDELLVSPV (86 aa)) form an N-LIP region. 2 disordered regions span residues 104-183 (VMSA…SVEE) and 300-341 (GSTL…AGSG). Over residues 105-117 (MSATSSPPQSPET) the composition is skewed to polar residues. Residues Ser110 and Ser114 each carry the phosphoserine modification. Residues 132–143 (NENKKKEKKVLE) are compositionally biased toward basic and acidic residues. Composition is skewed to low complexity over residues 161-179 (SETTGSLSPTESSTTTPPD) and 300-313 (GSTLNSLSSSPSGS). Residue Ser168 is modified to Phosphoserine. Residues 398–402 (DIDGT) carry the DXDXT motif motif. Lys496 carries the post-translational modification N6-acetyllysine. Position 511 is a phosphoserine (Ser511). Ser602 carries the post-translational modification Phosphoserine; by CDC28. The segment at 648 to 732 (SDISNDDSDN…TPNKSTMSKG (85 aa)) is disordered. Residues 651–663 (SNDDSDNIDEDTD) are compositionally biased toward acidic residues. Composition is skewed to polar residues over residues 664–679 (VSQQSNISRNRANSVK) and 687–699 (PQRNVSGSTNNNE). Residues 710–730 (ASDLVSSHSSSGSTPNKSTMS) are compositionally biased toward low complexity. Thr723 carries the post-translational modification Phosphothreonine; by CDC28. Residue Ser744 is modified to Phosphoserine; by CDC28. Phosphoserine occurs at positions 748, 773, and 774. The interval 757–780 (MDDEDSNYNRTKSRRASSAAATSI) is disordered. Position 801 is an N6-acetyllysine (Lys801). The tract at residues 807–862 (DVHSLGNSDTESRREQSVNETGRNQLPHNSMDDKDLDSRVSDEFDDDEFDEDEFED) is disordered. Residues Ser810 and Ser814 each carry the phosphoserine modification. A Phosphothreonine modification is found at Thr816. Residues 824-834 (VNETGRNQLPH) show a composition bias toward polar residues. The span at 836 to 848 (SMDDKDLDSRVSD) shows a compositional bias: basic and acidic residues. 2 positions are modified to phosphoserine: Ser844 and Ser847. Acidic residues predominate over residues 849–862 (EFDDDEFDEDEFED).

The protein belongs to the lipin family. Mg(2+) serves as cofactor. Post-translationally, acetylation at Lys-496 and Lys-801 by ESA1 promotes synthesis of diacylglycerol. In terms of processing, phosphorylated by CDC28 at the onset of mitosis, and dephosphorylated by the NEM1-SPO7 complex. Phosphorylation regulates recruitment on promoters of lipid biosynthetic enzymes.

The protein localises to the cytoplasm. The protein resides in the nucleus membrane. Its subcellular location is the endoplasmic reticulum membrane. The catalysed reaction is a 1,2-diacyl-sn-glycero-3-phosphate + H2O = a 1,2-diacyl-sn-glycerol + phosphate. With respect to regulation, phenylglyoxal and propranolol inhibit activity in dose-dependent manners with IC(50) values of 1.3 mM and 0.2 mM, respectively. Sertraline inhibits activity in a dose-dependent manner with an IC(50) value of 85 uM; the inhibitory effects of sertraline and propranolol are additive. Mg(2+)-dependent phosphatidate (PA) phosphatase which catalyzes the dephosphorylation of PA to yield diacylglycerol. Required for de novo lipid synthesis and formation of lipid droplets. Controls transcription of phospholipid biosynthetic genes and nuclear structure by regulating the amount of membrane present at the nuclear envelope. Involved in plasmid maintenance, in respiration and in cell proliferation. This is Phosphatidic acid phosphohydrolase 1 (PAH1) from Saccharomyces cerevisiae (strain ATCC 204508 / S288c) (Baker's yeast).